Reading from the N-terminus, the 198-residue chain is Sorcin (198 aa).

4 consecutive EF-hand domains span residues 29 to 64 (GQTQ…SGIA), 70 to 103 (FNLE…AVLN), 100 to 135 (AVLN…MGFR), and 134 to 169 (FRLS…LRAL). The Ca(2+) site is built by Asp-83, Asp-85, Ser-87, Thr-89, Glu-94, Asp-113, Asp-115, Ser-117, Thr-119, and Glu-124.

As to quaternary structure, homodimer. Interacts with GCA, RYR2 and ANXA7. Detected in cardiac myocytes.

It is found in the cytoplasm. Its subcellular location is the sarcoplasmic reticulum membrane. Functionally, calcium-binding protein that modulates excitation-contraction coupling in the heart. Contributes to calcium homeostasis in the heart sarcoplasmic reticulum. Modulates the activity of RYR2 calcium channels. This Homo sapiens (Human) protein is Sorcin (SRI).